The following is a 137-amino-acid chain: Phosphoribosyl-AMP cyclohydrolase (137 aa).

Position 84 (D84) interacts with Mg(2+). Residue C85 participates in Zn(2+) binding. Residues D86 and D88 each coordinate Mg(2+). C101 and C108 together coordinate Zn(2+).

Belongs to the PRA-CH family. In terms of assembly, homodimer. Mg(2+) is required as a cofactor. Requires Zn(2+) as cofactor.

It localises to the cytoplasm. The catalysed reaction is 1-(5-phospho-beta-D-ribosyl)-5'-AMP + H2O = 1-(5-phospho-beta-D-ribosyl)-5-[(5-phospho-beta-D-ribosylamino)methylideneamino]imidazole-4-carboxamide. The protein operates within amino-acid biosynthesis; L-histidine biosynthesis; L-histidine from 5-phospho-alpha-D-ribose 1-diphosphate: step 3/9. Its function is as follows. Catalyzes the hydrolysis of the adenine ring of phosphoribosyl-AMP. The sequence is that of Phosphoribosyl-AMP cyclohydrolase from Chlorobaculum tepidum (strain ATCC 49652 / DSM 12025 / NBRC 103806 / TLS) (Chlorobium tepidum).